Consider the following 267-residue polypeptide: Tryptophan synthase alpha chain (267 aa).

Catalysis depends on proton acceptor residues Glu-43 and Asp-54.

This sequence belongs to the TrpA family. As to quaternary structure, tetramer of two alpha and two beta chains.

The catalysed reaction is (1S,2R)-1-C-(indol-3-yl)glycerol 3-phosphate + L-serine = D-glyceraldehyde 3-phosphate + L-tryptophan + H2O. Its pathway is amino-acid biosynthesis; L-tryptophan biosynthesis; L-tryptophan from chorismate: step 5/5. The alpha subunit is responsible for the aldol cleavage of indoleglycerol phosphate to indole and glyceraldehyde 3-phosphate. In Bacillus subtilis (strain 168), this protein is Tryptophan synthase alpha chain.